The primary structure comprises 311 residues: Catechol 1,2-dioxygenase 1 (311 aa).

Fe cation-binding residues include tyrosine 164, tyrosine 200, histidine 224, and histidine 226.

Belongs to the intradiol ring-cleavage dioxygenase family. In terms of assembly, homodimer. Requires Fe(3+) as cofactor.

It catalyses the reaction catechol + O2 = cis,cis-muconate + 2 H(+). It functions in the pathway aromatic compound metabolism; beta-ketoadipate pathway; 5-oxo-4,5-dihydro-2-furylacetate from catechol: step 1/3. Functionally, can cleave 4-methyl-, 4-chloro-, and 3-methoxycatechol at lower rates than catechol, but has no activity with 4-nitrocatechol or protocatechuic acid. The polypeptide is Catechol 1,2-dioxygenase 1 (catA1) (Acinetobacter lwoffii).